A 456-amino-acid chain; its full sequence is Histidine--tRNA ligase (456 aa).

The protein belongs to the class-II aminoacyl-tRNA synthetase family. In terms of assembly, homodimer.

It localises to the cytoplasm. It carries out the reaction tRNA(His) + L-histidine + ATP = L-histidyl-tRNA(His) + AMP + diphosphate + H(+). The sequence is that of Histidine--tRNA ligase from Cupriavidus taiwanensis (strain DSM 17343 / BCRC 17206 / CCUG 44338 / CIP 107171 / LMG 19424 / R1) (Ralstonia taiwanensis (strain LMG 19424)).